The sequence spans 252 residues: Trans-aconitate 2-methyltransferase (252 aa).

It belongs to the methyltransferase superfamily. Tam family.

The protein resides in the cytoplasm. The enzyme catalyses trans-aconitate + S-adenosyl-L-methionine = (E)-3-(methoxycarbonyl)pent-2-enedioate + S-adenosyl-L-homocysteine. Catalyzes the S-adenosylmethionine monomethyl esterification of trans-aconitate. The polypeptide is Trans-aconitate 2-methyltransferase (Escherichia coli (strain SE11)).